The primary structure comprises 258 residues: Type III pantothenate kinase (258 aa).

6-13 (DAGNTRIK) lines the ATP pocket. Substrate contacts are provided by residues tyrosine 98 and 105–108 (GSDR). Catalysis depends on aspartate 107, which acts as the Proton acceptor. Threonine 131 is a binding site for ATP. Threonine 184 lines the substrate pocket.

The protein belongs to the type III pantothenate kinase family. In terms of assembly, homodimer. NH4(+) is required as a cofactor. K(+) serves as cofactor.

It is found in the cytoplasm. It catalyses the reaction (R)-pantothenate + ATP = (R)-4'-phosphopantothenate + ADP + H(+). It participates in cofactor biosynthesis; coenzyme A biosynthesis; CoA from (R)-pantothenate: step 1/5. In terms of biological role, catalyzes the phosphorylation of pantothenate (Pan), the first step in CoA biosynthesis. This is Type III pantothenate kinase from Herminiimonas arsenicoxydans.